The chain runs to 335 residues: UPF0353 protein Mflv_3659 (335 aa).

Helical transmembrane passes span 18 to 38 (WFFLFFFVVIGLVALYIVVQL) and 67 to 87 (LPAVLMILSLVSFTIAMAGPT). Positions 98 to 294 (VVMLVIDVSQ…EQLKQVFTNL (197 aa)) constitute a VWFA domain. Residues 309–329 (VGWLRLGAGVLALAALGALLI) form a helical membrane-spanning segment.

This sequence belongs to the UPF0353 family.

Its subcellular location is the cell membrane. The sequence is that of UPF0353 protein Mflv_3659 from Mycolicibacterium gilvum (strain PYR-GCK) (Mycobacterium gilvum (strain PYR-GCK)).